Here is a 382-residue protein sequence, read N- to C-terminus: Protein PEP-RELATED DEVELOPMENT ARRESTED 1 homolog, chloroplastic (382 aa).

The transit peptide at 1 to 44 (MAILPLSISHSLTSALSATSSGIGRPVARLLHPRVPSRPTVICL) directs the protein to the chloroplast.

The protein localises to the plastid. It localises to the chloroplast stroma. It is found in the chloroplast nucleoid. Plays an essential role in early steps of chloroplast development. May be involved in the redox control of plastid gene expression by maintening the redox state around chloroplast nucleoids. May positively regulate plastid-encoded RNA polymerase (PEP) activity. This Oryza sativa subsp. japonica (Rice) protein is Protein PEP-RELATED DEVELOPMENT ARRESTED 1 homolog, chloroplastic.